Consider the following 239-residue polypeptide: ATP synthase subunit b (239 aa).

Residues 1–22 (MYAQEAQQKPEAQQSAPAAEQP) show a composition bias toward low complexity. The interval 1-64 (MYAQEAQQKP…GEEEAGEHME (64 aa)) is disordered. Composition is skewed to basic and acidic residues over residues 23 to 33 (KPAEEQAKPEQ) and 45 to 64 (ELSEASHAAEGEEEAGEHME). The chain crosses the membrane as a helical span at residues 85-105 (SYWIAMAFNFAIVFALLGWAM).

It belongs to the ATPase B chain family. As to quaternary structure, F-type ATPases have 2 components, F(1) - the catalytic core - and F(0) - the membrane proton channel. F(1) has five subunits: alpha(3), beta(3), gamma(1), delta(1), epsilon(1). F(0) has three main subunits: a(1), b(2) and c(10-14). The alpha and beta chains form an alternating ring which encloses part of the gamma chain. F(1) is attached to F(0) by a central stalk formed by the gamma and epsilon chains, while a peripheral stalk is formed by the delta and b chains.

It is found in the cell inner membrane. In terms of biological role, f(1)F(0) ATP synthase produces ATP from ADP in the presence of a proton or sodium gradient. F-type ATPases consist of two structural domains, F(1) containing the extramembraneous catalytic core and F(0) containing the membrane proton channel, linked together by a central stalk and a peripheral stalk. During catalysis, ATP synthesis in the catalytic domain of F(1) is coupled via a rotary mechanism of the central stalk subunits to proton translocation. Its function is as follows. Component of the F(0) channel, it forms part of the peripheral stalk, linking F(1) to F(0). In Koribacter versatilis (strain Ellin345), this protein is ATP synthase subunit b.